The chain runs to 393 residues: Glutamyl-tRNA reductase (393 aa).

Substrate is bound by residues 47 to 50 (TCGR), serine 98, 103 to 105 (ETD), and glutamine 109. Catalysis depends on cysteine 48, which acts as the Nucleophile. 177-182 (GAGAVG) serves as a coordination point for NADP(+).

This sequence belongs to the glutamyl-tRNA reductase family. Homodimer.

It carries out the reaction (S)-4-amino-5-oxopentanoate + tRNA(Glu) + NADP(+) = L-glutamyl-tRNA(Glu) + NADPH + H(+). The protein operates within porphyrin-containing compound metabolism; protoporphyrin-IX biosynthesis; 5-aminolevulinate from L-glutamyl-tRNA(Glu): step 1/2. In terms of biological role, catalyzes the NADPH-dependent reduction of glutamyl-tRNA(Glu) to glutamate 1-semialdehyde (GSA). In Pyrobaculum islandicum (strain DSM 4184 / JCM 9189 / GEO3), this protein is Glutamyl-tRNA reductase.